Reading from the N-terminus, the 156-residue chain is Transcription antitermination protein NusB (156 aa).

The protein belongs to the NusB family.

Functionally, involved in transcription antitermination. Required for transcription of ribosomal RNA (rRNA) genes. Binds specifically to the boxA antiterminator sequence of the ribosomal RNA (rrn) operons. The protein is Transcription antitermination protein NusB of Rickettsia bellii (strain OSU 85-389).